The primary structure comprises 420 residues: CinA-like protein (420 aa).

It belongs to the CinA family.

The polypeptide is CinA-like protein (Chloroherpeton thalassium (strain ATCC 35110 / GB-78)).